We begin with the raw amino-acid sequence, 415 residues long: N-succinylarginine dihydrolase (415 aa).

Substrate contacts are provided by residues 18–27, N100, and 127–128; these read AGLSRGNIAS and HR. Residue E161 is part of the active site. Position 193 (R193) interacts with substrate. The active site involves H229. Substrate contacts are provided by D231 and N340. C346 functions as the Nucleophile in the catalytic mechanism.

Belongs to the succinylarginine dihydrolase family. Homodimer.

It catalyses the reaction N(2)-succinyl-L-arginine + 2 H2O + 2 H(+) = N(2)-succinyl-L-ornithine + 2 NH4(+) + CO2. Its pathway is amino-acid degradation; L-arginine degradation via AST pathway; L-glutamate and succinate from L-arginine: step 2/5. Catalyzes the hydrolysis of N(2)-succinylarginine into N(2)-succinylornithine, ammonia and CO(2). This Sphingopyxis alaskensis (strain DSM 13593 / LMG 18877 / RB2256) (Sphingomonas alaskensis) protein is N-succinylarginine dihydrolase.